Here is a 197-residue protein sequence, read N- to C-terminus: Nucleoside triphosphate pyrophosphatase (197 aa).

Asp71 serves as the catalytic Proton acceptor.

The protein belongs to the Maf family. A divalent metal cation is required as a cofactor.

It localises to the cytoplasm. The catalysed reaction is a ribonucleoside 5'-triphosphate + H2O = a ribonucleoside 5'-phosphate + diphosphate + H(+). It carries out the reaction a 2'-deoxyribonucleoside 5'-triphosphate + H2O = a 2'-deoxyribonucleoside 5'-phosphate + diphosphate + H(+). Nucleoside triphosphate pyrophosphatase. May have a dual role in cell division arrest and in preventing the incorporation of modified nucleotides into cellular nucleic acids. The chain is Nucleoside triphosphate pyrophosphatase from Synechococcus sp. (strain JA-3-3Ab) (Cyanobacteria bacterium Yellowstone A-Prime).